A 750-amino-acid polypeptide reads, in one-letter code: Methylmalonyl-CoA mutase, mitochondrial (750 aa).

A mitochondrion-targeting transit peptide spans 1-32; that stretch reads MLRAKNQLFLLSPHYLKQVKESSGSRLIQQRL. Glutamine 50 is a binding site for malonyl-CoA. Lysine 89 is modified (N6-acetyllysine). Residues 96–99 and 106–110 contribute to the malonyl-CoA site; these read YPTM and TIRQY. Lysine 212 bears the N6-acetyllysine mark. Malonyl-CoA-binding positions include 216-218, arginine 228, lysine 255, histidine 265, and 304-306; these read TIQ and RLS. N6-acetyllysine is present on lysine 335. N6-succinyllysine is present on lysine 343. Serine 481 is subject to Phosphoserine. Residue lysine 595 is modified to N6-succinyllysine. At lysine 602 the chain carries N6-acetyllysine. The B12-binding domain occupies 614 to 746; that stretch reads RPRLLVAKMG…DDIEKCLEKK (133 aa). Residue histidine 627 coordinates adenosylcob(III)alamin.

This sequence belongs to the methylmalonyl-CoA mutase family. As to quaternary structure, homodimer. Interacts (the apoenzyme form) with MMAA; the interaction is GTP dependent. Requires adenosylcob(III)alamin as cofactor.

It localises to the mitochondrion matrix. The protein resides in the mitochondrion. It is found in the cytoplasm. The catalysed reaction is (R)-methylmalonyl-CoA = succinyl-CoA. Inhibited by itaconyl-CoA, a metabolite that inactivates the coenzyme B12 cofactor. Its function is as follows. Catalyzes the reversible isomerization of methylmalonyl-CoA (MMCoA) (generated from branched-chain amino acid metabolism and degradation of dietary odd chain fatty acids and cholesterol) to succinyl-CoA (3-carboxypropionyl-CoA), a key intermediate of the tricarboxylic acid cycle. The chain is Methylmalonyl-CoA mutase, mitochondrial (MMUT) from Pongo abelii (Sumatran orangutan).